The chain runs to 323 residues: NADH-ubiquinone oxidoreductase chain 1 (323 aa).

Helical transmembrane passes span 8-28 (LLNP…LTLI), 74-94 (LLFI…WLPL), 105-125 (LGML…LGSG), 150-170 (SLGL…LTTF), 176-196 (TIWL…STLA), 227-247 (LFFL…TILF), 258-278 (ELTS…FLWV), and 298-318 (FLPI…FTGS).

The protein belongs to the complex I subunit 1 family.

The protein resides in the mitochondrion inner membrane. It carries out the reaction a ubiquinone + NADH + 5 H(+)(in) = a ubiquinol + NAD(+) + 4 H(+)(out). In terms of biological role, core subunit of the mitochondrial membrane respiratory chain NADH dehydrogenase (Complex I) that is believed to belong to the minimal assembly required for catalysis. Complex I functions in the transfer of electrons from NADH to the respiratory chain. The immediate electron acceptor for the enzyme is believed to be ubiquinone. The polypeptide is NADH-ubiquinone oxidoreductase chain 1 (MT-ND1) (Latimeria chalumnae (Coelacanth)).